A 249-amino-acid polypeptide reads, in one-letter code: 5'-nucleotidase SurE (249 aa).

Residues Asp-8, Asp-9, Ser-39, and Asn-91 each coordinate a divalent metal cation.

This sequence belongs to the SurE nucleotidase family. A divalent metal cation is required as a cofactor.

The protein resides in the cytoplasm. It carries out the reaction a ribonucleoside 5'-phosphate + H2O = a ribonucleoside + phosphate. In terms of biological role, nucleotidase that shows phosphatase activity on nucleoside 5'-monophosphates. This chain is 5'-nucleotidase SurE, found in Pseudomonas fluorescens (strain Pf0-1).